Here is a 314-residue protein sequence, read N- to C-terminus: D-alanine--D-alanine ligase (314 aa).

Residues 114–309 (KQLWRAHGLP…FDALVLRILD (196 aa)) form the ATP-grasp domain. Position 140-195 (140-195 (IEALGLPLIVKPVHEGSTIGISIVETRDALIAAHAEASRFDSAIMAERFVQGEEYT)) interacts with ATP. Aspartate 263, glutamate 276, and asparagine 278 together coordinate Mg(2+).

Belongs to the D-alanine--D-alanine ligase family. Mg(2+) is required as a cofactor. Mn(2+) serves as cofactor.

It localises to the cytoplasm. The catalysed reaction is 2 D-alanine + ATP = D-alanyl-D-alanine + ADP + phosphate + H(+). It functions in the pathway cell wall biogenesis; peptidoglycan biosynthesis. Cell wall formation. The sequence is that of D-alanine--D-alanine ligase from Chromohalobacter salexigens (strain ATCC BAA-138 / DSM 3043 / CIP 106854 / NCIMB 13768 / 1H11).